The sequence spans 93 residues: UPF0358 protein BBR47_22520 (93 aa).

The protein belongs to the UPF0358 family.

This is UPF0358 protein BBR47_22520 from Brevibacillus brevis (strain 47 / JCM 6285 / NBRC 100599).